The chain runs to 1885 residues: Fatty acid synthase subunit alpha (1885 aa).

Residues 92–107 show a composition bias toward basic and acidic residues; the sequence is PDPADLAPKETPKQEE. The interval 92 to 140 is disordered; that stretch reads PDPADLAPKETPKQEESTPSAPAAATPTPAAAAAPTPAPAPASAGPVES. Low complexity predominate over residues 108–126; it reads STPSAPAAATPTPAAAAAP. A Carrier domain is found at 146 to 221; that stretch reads VKANLLIHVL…EQFQDSFSGQ (76 aa). S181 carries the O-(pantetheine 4'-phosphoryl)serine modification. One can recognise a Ketosynthase family 3 (KS3) domain in the interval 1121–1661; it reads IQEIVVQHDL…QKGAQAVVVH (541 aa). Active-site for beta-ketoacyl synthase activity residues include C1304, H1546, and H1587. 3 residues coordinate Mg(2+): D1771, V1772, and E1773. Acetyl-CoA is bound by residues 1771 to 1773, Y1797, S1807, 1816 to 1826, 1840 to 1843, and 1870 to 1872; these read DVE, EAVFKALGVES, RDVN, and ISH. S1871 and H1872 together coordinate Mg(2+).

This sequence belongs to the thiolase-like superfamily. Fungal fatty acid synthetase subunit alpha family. [Alpha(6)beta(6)] hexamers of two multifunctional subunits (alpha and beta).

It carries out the reaction acetyl-CoA + n malonyl-CoA + 2n NADPH + 4n H(+) = a long-chain-acyl-CoA + n CoA + n CO2 + 2n NADP(+).. The catalysed reaction is a fatty acyl-[ACP] + malonyl-[ACP] + H(+) = a 3-oxoacyl-[ACP] + holo-[ACP] + CO2. The enzyme catalyses a (3R)-hydroxyacyl-[ACP] + NADP(+) = a 3-oxoacyl-[ACP] + NADPH + H(+). Fatty acid synthetase catalyzes the formation of long-chain fatty acids from acetyl-CoA, malonyl-CoA and NADPH. The alpha subunit contains domains for: acyl carrier protein, 3-oxoacyl-[acyl-carrier-protein] reductase, and 3-oxoacyl-[acyl-carrier-protein] synthase. The protein is Fatty acid synthase subunit alpha (FAS2) of Candida albicans (Yeast).